The following is a 385-amino-acid chain: Deoxyguanosinetriphosphate triphosphohydrolase-like protein (385 aa).

Residues arginine 62 to serine 197 enclose the HD domain.

This sequence belongs to the dGTPase family. Type 2 subfamily.

This Neorickettsia sennetsu (strain ATCC VR-367 / Miyayama) (Ehrlichia sennetsu) protein is Deoxyguanosinetriphosphate triphosphohydrolase-like protein.